The chain runs to 674 residues: Anosmin-1 (674 aa).

The signal sequence occupies residues 1-21 (MVRRAPGASLALLLWVTAVSC). 4 disulfide bridges follow: C47–C71, C80–C99, C84–C95, and C110–C114. N-linked (GlcNAc...) asparagine glycosylation occurs at N65. A WAP domain is found at 121–170 (LSVKQGDCPAPEKASGFAAACFESCEADSECSGVKKCCSNGCGHTCQVPK). Fibronectin type-III domains follow at residues 180–281 (PRKE…SKDP), 286–392 (APSN…TTQD), 418–515 (RRKP…FFVT), and 545–652 (KPEN…DLPP). N203 and N294 each carry an N-linked (GlcNAc...) asparagine glycan. The segment covering 388-402 (STTQDNRNNNEQTSV) has biased composition (polar residues). Residues 388–413 (STTQDNRNNNEQTSVEKPPKGVVDPY) are disordered. Residues N465, N548, and N559 are each glycosylated (N-linked (GlcNAc...) asparagine). The segment at 655-674 (PHRPHLKHHPHRYKPPPEKY) is disordered. Positions 656-668 (HRPHLKHHPHRYK) are enriched in basic residues.

It localises to the cell surface. May be an adhesion-like molecule with anti-protease activity. This Coturnix japonica (Japanese quail) protein is Anosmin-1.